The primary structure comprises 397 residues: Chorismate synthase (397 aa).

Positions 40 and 46 each coordinate NADP(+). FMN-binding positions include 129 to 131 (RAS), 257 to 258 (QA), Gly302, 317 to 321 (KPIAT), and Arg343.

Belongs to the chorismate synthase family. As to quaternary structure, homotetramer. The cofactor is FMNH2.

It catalyses the reaction 5-O-(1-carboxyvinyl)-3-phosphoshikimate = chorismate + phosphate. It participates in metabolic intermediate biosynthesis; chorismate biosynthesis; chorismate from D-erythrose 4-phosphate and phosphoenolpyruvate: step 7/7. Functionally, catalyzes the anti-1,4-elimination of the C-3 phosphate and the C-6 proR hydrogen from 5-enolpyruvylshikimate-3-phosphate (EPSP) to yield chorismate, which is the branch point compound that serves as the starting substrate for the three terminal pathways of aromatic amino acid biosynthesis. This reaction introduces a second double bond into the aromatic ring system. The protein is Chorismate synthase of Prosthecochloris aestuarii (strain DSM 271 / SK 413).